Here is a 193-residue protein sequence, read N- to C-terminus: Iron-sulfur flavoprotein MJ1083 (193 aa).

Residues Cys-47, Cys-50, Cys-53, and Cys-59 each coordinate [4Fe-4S] cluster.

Belongs to the SsuE family. Isf subfamily. In terms of assembly, homodimer. It depends on FMN as a cofactor. [4Fe-4S] cluster is required as a cofactor.

Redox-active protein probably involved in electron transport. The protein is Iron-sulfur flavoprotein MJ1083 of Methanocaldococcus jannaschii (strain ATCC 43067 / DSM 2661 / JAL-1 / JCM 10045 / NBRC 100440) (Methanococcus jannaschii).